Consider the following 226-residue polypeptide: Cytidylate kinase (226 aa).

11 to 19 serves as a coordination point for ATP; it reads GPAAAGKST.

It belongs to the cytidylate kinase family. Type 1 subfamily.

Its subcellular location is the cytoplasm. The catalysed reaction is CMP + ATP = CDP + ADP. It catalyses the reaction dCMP + ATP = dCDP + ADP. This is Cytidylate kinase from Bacillus licheniformis (strain ATCC 14580 / DSM 13 / JCM 2505 / CCUG 7422 / NBRC 12200 / NCIMB 9375 / NCTC 10341 / NRRL NRS-1264 / Gibson 46).